The following is a 275-amino-acid chain: NH(3)-dependent NAD(+) synthetase (275 aa).

46 to 53 (GISGGQDS) provides a ligand contact to ATP. D52 serves as a coordination point for Mg(2+). R140 provides a ligand contact to deamido-NAD(+). An ATP-binding site is contributed by T160. Position 165 (E165) interacts with Mg(2+). Positions 173 and 180 each coordinate deamido-NAD(+). Positions 189 and 211 each coordinate ATP. A deamido-NAD(+)-binding site is contributed by 260–261 (HK).

This sequence belongs to the NAD synthetase family. In terms of assembly, homodimer.

It carries out the reaction deamido-NAD(+) + NH4(+) + ATP = AMP + diphosphate + NAD(+) + H(+). It functions in the pathway cofactor biosynthesis; NAD(+) biosynthesis; NAD(+) from deamido-NAD(+) (ammonia route): step 1/1. Catalyzes the ATP-dependent amidation of deamido-NAD to form NAD. Uses ammonia as a nitrogen source. The protein is NH(3)-dependent NAD(+) synthetase of Escherichia coli O157:H7.